Reading from the N-terminus, the 291-residue chain is Nucleotide-binding protein jk1004 (291 aa).

Residue 16–23 (GMSGAGRR) participates in ATP binding. Position 67–70 (67–70 (DVRS)) interacts with GTP.

It belongs to the RapZ-like family.

Its function is as follows. Displays ATPase and GTPase activities. This Corynebacterium jeikeium (strain K411) protein is Nucleotide-binding protein jk1004.